The primary structure comprises 562 residues: Chaperonin GroEL 1 (562 aa).

ATP is bound by residues 30 to 33, Lys51, 87 to 91, Gly415, 478 to 480, and Asp494; these read TLGP, DGTTT, and NAA.

The protein belongs to the chaperonin (HSP60) family. In terms of assembly, forms a cylinder of 14 subunits composed of two heptameric rings stacked back-to-back. Interacts with the co-chaperonin GroES.

The protein localises to the cytoplasm. It carries out the reaction ATP + H2O + a folded polypeptide = ADP + phosphate + an unfolded polypeptide.. Functionally, together with its co-chaperonin GroES, plays an essential role in assisting protein folding. The GroEL-GroES system forms a nano-cage that allows encapsulation of the non-native substrate proteins and provides a physical environment optimized to promote and accelerate protein folding. In Sorangium cellulosum (strain So ce56) (Polyangium cellulosum (strain So ce56)), this protein is Chaperonin GroEL 1.